The chain runs to 655 residues: MRAARMAQSTGRQLLRLRGVSSWPGELLGQPRPGPARRPYASGVAQAAVDQSDSQPSEASTREKRANSVSKSFAVGTFKGQLTTDQVFPYPSVLNEDQTQFLKELVGPVTRFFEEVNDAAKNDMLERVEETTMQGLKELGAFGLQVPNELGGVGLCNTQYARLVEIVGMYDLGVGIVLGAHQSIGFKGILLFGTKAQKEKYLPKLASGETIAAFCLTEPSSGSDAASIRSSAVPSPCGKYYTLNGSKIWISNGGLADIFTVFAKTPVTDTATGAVKEKITAFVVERSFGGVTHGPPEKKMGIKASNTAEVYFDGVRVPAENVLGEVGGGFKVAMHILNNGRFGMAAALAGTMKGIIAKAVDHAANRTQFGEKIHNFGLIQEKLARMAMLQYVTESMAYMVSANMDQGSTDFQIEAAISKIFGSEAAWKVTDECIQIMGGMGFMKEPGVERVLRDLRIFRIFEGTNDILRLFVALQGCMDKGKELSGLGNALKNPFGNAGLLLGEAGKQLRRRAGLGSGLSLSGIVHQELSRSGELAVQALEQFATVVEAKLIKHKKDIINEQFLLQRLADSAIDLYAMVVVLSRASRSLSEGHPTAQHEKMLCDSWCIEAAARIRENMTALQSDPQQQELFRNFKSISKALVERGGVVTSNPLGF.

A mitochondrion-targeting transit peptide spans 1–40 (MRAARMAQSTGRQLLRLRGVSSWPGELLGQPRPGPARRPY). The tract at residues 22 to 66 (SWPGELLGQPRPGPARRPYASGVAQAAVDQSDSQPSEASTREKRA) is disordered. The segment at 41 to 482 (ASGVAQAAVD…ALQGCMDKGK (442 aa)) is catalytic. The segment covering 49–59 (VDQSDSQPSEA) has biased composition (polar residues). Position 71 is an N6-acetyllysine; alternate (K71). At K71 the chain carries N6-succinyllysine; alternate. Residue K195 is modified to N6-succinyllysine. 214-223 (FCLTEPSSGS) is an FAD binding site. C237 bears the S-nitrosocysteine mark. K239 carries the post-translational modification N6-acetyllysine; alternate. K239 bears the N6-succinyllysine; alternate mark. 249–251 (WIS) is an FAD binding site. N6-acetyllysine; alternate is present on residues K276 and K278. An N6-succinyllysine; alternate mark is found at K276 and K278. N6-acetyllysine is present on K298. K331 bears the N6-acetyllysine; alternate mark. K331 carries the N6-succinyllysine; alternate modification. An N6-succinyllysine modification is found at K372. 461–463 (FEG) lines the substrate pocket. The active-site Proton acceptor is the E462. Residue 464–466 (TND) coordinates FAD. N6-acetyllysine; alternate is present on K482. K482 is subject to N6-succinyllysine; alternate. The tract at residues 483-516 (ELSGLGNALKNPFGNAGLLLGEAGKQLRRRAGLG) is membrane-anchoring. Residues S517 and S522 each carry the phosphoserine modification. K550 is subject to N6-acetyllysine. K556 carries the post-translational modification N6-acetyllysine; alternate. At K556 the chain carries N6-succinyllysine; alternate. Q562 provides a ligand contact to FAD. At K639 the chain carries N6-succinyllysine.

Belongs to the acyl-CoA dehydrogenase family. As to quaternary structure, homodimer. Homodimerizes after import into the mitochondrion. FAD serves as cofactor. Post-translationally, S-nitrosylation at Cys-237 in liver improves catalytic efficiency.

The protein resides in the mitochondrion inner membrane. The catalysed reaction is a very-long-chain 2,3-saturated fatty acyl-CoA + oxidized [electron-transfer flavoprotein] + H(+) = a very-long-chain (2E)-enoyl-CoA + reduced [electron-transfer flavoprotein]. The enzyme catalyses dodecanoyl-CoA + oxidized [electron-transfer flavoprotein] + H(+) = (2E)-dodecenoyl-CoA + reduced [electron-transfer flavoprotein]. It carries out the reaction tetradecanoyl-CoA + oxidized [electron-transfer flavoprotein] + H(+) = (2E)-tetradecenoyl-CoA + reduced [electron-transfer flavoprotein]. It catalyses the reaction oxidized [electron-transfer flavoprotein] + hexadecanoyl-CoA + H(+) = (2E)-hexadecenoyl-CoA + reduced [electron-transfer flavoprotein]. The catalysed reaction is octadecanoyl-CoA + oxidized [electron-transfer flavoprotein] + H(+) = (2E)-octadecenoyl-CoA + reduced [electron-transfer flavoprotein]. The enzyme catalyses eicosanoyl-CoA + oxidized [electron-transfer flavoprotein] + H(+) = (2E)-eicosenoyl-CoA + reduced [electron-transfer flavoprotein]. It carries out the reaction docosanoyl-CoA + oxidized [electron-transfer flavoprotein] + H(+) = (2E)-docosenoyl-CoA + reduced [electron-transfer flavoprotein]. It catalyses the reaction tetracosanoyl-CoA + oxidized [electron-transfer flavoprotein] + H(+) = (2E)-tetracosenoyl-CoA + reduced [electron-transfer flavoprotein]. Its pathway is lipid metabolism; mitochondrial fatty acid beta-oxidation. Functionally, very long-chain specific acyl-CoA dehydrogenase is one of the acyl-CoA dehydrogenases that catalyze the first step of mitochondrial fatty acid beta-oxidation, an aerobic process breaking down fatty acids into acetyl-CoA and allowing the production of energy from fats. The first step of fatty acid beta-oxidation consists in the removal of one hydrogen from C-2 and C-3 of the straight-chain fatty acyl-CoA thioester, resulting in the formation of trans-2-enoyl-CoA. Among the different mitochondrial acyl-CoA dehydrogenases, very long-chain specific acyl-CoA dehydrogenase acts specifically on acyl-CoAs with saturated 12 to 24 carbons long primary chains. This chain is Very long-chain specific acyl-CoA dehydrogenase, mitochondrial, found in Bos taurus (Bovine).